A 484-amino-acid chain; its full sequence is uncharacterized protein (484 aa).

Positions 14 to 82 (VPLHRQIEQY…KGGGTKVVNS (69 aa)) constitute an HTH gntR-type domain. The H-T-H motif DNA-binding region spans 42–61 (QRTLADMFQVNRSTVTAAID). Lys-327 carries the post-translational modification N6-(pyridoxal phosphate)lysine.

In the C-terminal section; belongs to the class-I pyridoxal-phosphate-dependent aminotransferase family. Pyridoxal 5'-phosphate is required as a cofactor.

This is an uncharacterized protein from Bacillus subtilis (strain 168).